A 460-amino-acid polypeptide reads, in one-letter code: Nucleosome assembly protein 1-like 2 (460 aa).

Composition is skewed to basic and acidic residues over residues 1–11 (MAESENRKELS) and 27–36 (LGEHLERGED). Disordered regions lie at residues 1–88 (MAES…ADRP) and 214–238 (EEEE…EDPK). Residues 214-236 (EEEEEEEEDDIEATGEENKEEED) show a composition bias toward acidic residues. Residues 346 to 352 (IKKKQKH) carry the Nuclear localization signal motif.

Belongs to the nucleosome assembly protein (NAP) family.

Its subcellular location is the nucleus. Acidic protein which may be involved in interactions with other proteins or DNA. In Homo sapiens (Human), this protein is Nucleosome assembly protein 1-like 2 (NAP1L2).